The chain runs to 568 residues: Autophagy-related protein 17 (568 aa).

Disordered regions lie at residues 1–59 and 522–568; these read MASF…DSSE and SYEM…ERPF. Basic and acidic residues predominate over residues 522–546; sequence SYEMEAHGEPENEGKVETAYERETE.

Belongs to the ATG17 family.

It localises to the cytoplasm. It is found in the preautophagosomal structure membrane. Autophagy-specific protein that functions in response to autophagy-inducing signals as a scaffold to recruit other ATG proteins to organize pre-autophagosomal structure (PAS) formation. Modulates the timing and magnitude of the autophagy response, such as the size of the sequestering vesicles. Plays particularly a role in pexophagy and nucleophagy. The chain is Autophagy-related protein 17 (apg-9) from Neurospora crassa (strain ATCC 24698 / 74-OR23-1A / CBS 708.71 / DSM 1257 / FGSC 987).